Consider the following 352-residue polypeptide: F-box/kelch-repeat protein SKIP30 (352 aa).

Positions 9 to 55 constitute an F-box domain; the sequence is SGLLDGIPEAVALRCLAHVPLHLHPNLELVSRSWRAAIRSHELFRVR. Kelch repeat units follow at residues 57–109, 110–167, 168–215, 243–293, and 296–351; these read ELRS…TTAG, MLFV…VLQG, KIVV…LVVN, YGWP…MTSL, and EVLI…TQLT.

Part of a SCF (ASK-cullin-F-box) protein ligase complex. Interacts with SKP1A/ASK1.

Its pathway is protein modification; protein ubiquitination. Functionally, component of SCF(ASK-cullin-F-box) E3 ubiquitin ligase complexes, which may mediate the ubiquitination and subsequent proteasomal degradation of target proteins. In Arabidopsis thaliana (Mouse-ear cress), this protein is F-box/kelch-repeat protein SKIP30 (SKIP30).